A 258-amino-acid chain; its full sequence is UPF0246 protein ETA_07010 (258 aa).

Belongs to the UPF0246 family.

In Erwinia tasmaniensis (strain DSM 17950 / CFBP 7177 / CIP 109463 / NCPPB 4357 / Et1/99), this protein is UPF0246 protein ETA_07010.